The following is a 547-amino-acid chain: Chaperonin GroEL (547 aa).

ATP contacts are provided by residues 30–33 (TLGP), Lys51, 87–91 (DGTTT), Gly415, 479–481 (NAA), and Asp495.

Belongs to the chaperonin (HSP60) family. As to quaternary structure, forms a cylinder of 14 subunits composed of two heptameric rings stacked back-to-back. Interacts with the co-chaperonin GroES.

It localises to the cytoplasm. The enzyme catalyses ATP + H2O + a folded polypeptide = ADP + phosphate + an unfolded polypeptide.. Together with its co-chaperonin GroES, plays an essential role in assisting protein folding. The GroEL-GroES system forms a nano-cage that allows encapsulation of the non-native substrate proteins and provides a physical environment optimized to promote and accelerate protein folding. In Delftia acidovorans (strain DSM 14801 / SPH-1), this protein is Chaperonin GroEL.